Reading from the N-terminus, the 459-residue chain is ATP synthase subunit beta (459 aa).

ATP is bound at residue 149–156 (GGAGVGKT).

Belongs to the ATPase alpha/beta chains family. In terms of assembly, F-type ATPases have 2 components, CF(1) - the catalytic core - and CF(0) - the membrane proton channel. CF(1) has five subunits: alpha(3), beta(3), gamma(1), delta(1), epsilon(1). CF(0) has three main subunits: a(1), b(2) and c(9-12). The alpha and beta chains form an alternating ring which encloses part of the gamma chain. CF(1) is attached to CF(0) by a central stalk formed by the gamma and epsilon chains, while a peripheral stalk is formed by the delta and b chains.

It localises to the cell inner membrane. It carries out the reaction ATP + H2O + 4 H(+)(in) = ADP + phosphate + 5 H(+)(out). Its function is as follows. Produces ATP from ADP in the presence of a proton gradient across the membrane. The catalytic sites are hosted primarily by the beta subunits. The protein is ATP synthase subunit beta of Pseudomonas savastanoi pv. phaseolicola (strain 1448A / Race 6) (Pseudomonas syringae pv. phaseolicola (strain 1448A / Race 6)).